The primary structure comprises 460 residues: GTPase Der (460 aa).

2 EngA-type G domains span residues 2 to 166 (KTIA…AEER) and 175 to 353 (TRIA…QERK). Residues 8–15 (GRPNVGKS), 55–59 (DTGGL), 118–121 (NKLD), 181–188 (GQPNAGKS), 228–232 (DTAGL), and 293–296 (NKID) contribute to the GTP site. A KH-like domain is found at 354–446 (KRIPTHRLTQ…LLWKWRKAEG (93 aa)).

The protein belongs to the TRAFAC class TrmE-Era-EngA-EngB-Septin-like GTPase superfamily. EngA (Der) GTPase family. As to quaternary structure, associates with the 50S ribosomal subunit.

GTPase that plays an essential role in the late steps of ribosome biogenesis. The protein is GTPase Der of Methylacidiphilum infernorum (isolate V4) (Methylokorus infernorum (strain V4)).